A 224-amino-acid polypeptide reads, in one-letter code: 7-cyano-7-deazaguanine synthase (224 aa).

14 to 24 (FSGGQDSTTCL) contributes to the ATP binding site. Cysteine 190, cysteine 198, cysteine 201, and cysteine 204 together coordinate Zn(2+).

The protein belongs to the QueC family. The cofactor is Zn(2+).

It catalyses the reaction 7-carboxy-7-deazaguanine + NH4(+) + ATP = 7-cyano-7-deazaguanine + ADP + phosphate + H2O + H(+). Its pathway is purine metabolism; 7-cyano-7-deazaguanine biosynthesis. Functionally, catalyzes the ATP-dependent conversion of 7-carboxy-7-deazaguanine (CDG) to 7-cyano-7-deazaguanine (preQ(0)). This Haemophilus ducreyi (strain 35000HP / ATCC 700724) protein is 7-cyano-7-deazaguanine synthase.